A 386-amino-acid chain; its full sequence is Acetate kinase (386 aa).

A Mg(2+)-binding site is contributed by N7. Position 14 (K14) interacts with ATP. R78 serves as a coordination point for substrate. The active-site Proton donor/acceptor is the D135. ATP is bound by residues 195-199, 268-270, and 316-320; these read HLGNG, DMR, and GIGEN. E370 is a binding site for Mg(2+).

The protein belongs to the acetokinase family. In terms of assembly, homodimer. It depends on Mg(2+) as a cofactor. Mn(2+) serves as cofactor.

It is found in the cytoplasm. It catalyses the reaction acetate + ATP = acetyl phosphate + ADP. It participates in metabolic intermediate biosynthesis; acetyl-CoA biosynthesis; acetyl-CoA from acetate: step 1/2. Its function is as follows. Catalyzes the formation of acetyl phosphate from acetate and ATP. Can also catalyze the reverse reaction. This Arthrobacter sp. (strain FB24) protein is Acetate kinase.